The chain runs to 405 residues: Phosphopentomutase (405 aa).

Asp10, Asp305, His310, Asp346, His347, and His358 together coordinate Mn(2+).

Belongs to the phosphopentomutase family. Mn(2+) is required as a cofactor.

The protein localises to the cytoplasm. It carries out the reaction 2-deoxy-alpha-D-ribose 1-phosphate = 2-deoxy-D-ribose 5-phosphate. It catalyses the reaction alpha-D-ribose 1-phosphate = D-ribose 5-phosphate. Its pathway is carbohydrate degradation; 2-deoxy-D-ribose 1-phosphate degradation; D-glyceraldehyde 3-phosphate and acetaldehyde from 2-deoxy-alpha-D-ribose 1-phosphate: step 1/2. Isomerase that catalyzes the conversion of deoxy-ribose 1-phosphate (dRib-1-P) and ribose 1-phosphate (Rib-1-P) to deoxy-ribose 5-phosphate (dRib-5-P) and ribose 5-phosphate (Rib-5-P), respectively. The polypeptide is Phosphopentomutase (Methylobacterium sp. (strain 4-46)).